The following is a 1055-amino-acid chain: MLNENDIEQLTLQRLQSLGWEYRYGKDLPVHEGKFARGDLSGVVFVEQLREAVRKLNPQLPESAVDSVVKSATKSDIGDLVVRNQTFYKLLRDGVRVEYTQNGEQKIEMVRLVDFEHWGNNRFVAVNQLEIRSRKGGKRIPDIIGFVNGLPLVVFELKNPLRESADLLQAFNQFETYKDEIAELFVYNQALIISDGIVARLGSLSADFQRFTPWKVVDEKNKSARLYFDDELQSLLNGLMQPEDLLDYIRYFVLFERDSVGKTIKKIAAYHQYYGVNEAVDSTIWATSEKGDRRIGVMWHTQGSGKSISMLFYAGKLLAQPELKNPTIVVVTDRNDLDGQLFQTFSSGKDLIKQTPQQVEDRDQLRQLLAQNEVGGVFFTTIQKFALNEEESRFPILNERNNIIVISDEAHRSQYGFTQKLHNGKFQTGYARHLRDALPNASFIGFTGTPISLEDKDTQDVFGRYVSIYDLQDAVEDGATVPIVYDDARQIRLNKKDHDALFAEIDALLEEEPSTSLRLREKLLGSQERLIELAADFVQHFAKRNEVVDSKAMMVVSSRQICVDLYNQIIALHPEWHSDNINEGAIKIVMTGSASDTPEMQKHIYSKQEKQTLERRFKDPNDPLKVVIVRDMWLTGFDAPCCNTMYLDKPMKGHNLMQAIARVNRVFANKSRENGGLIVDYVGLAKELRAATQQYTNSTGKGQLAEDVQSVFFKMKEQLEFIRTLFATPIEGKTFDVQAALEKDNPNDLLMAIRFAANHILSLDQLSFDGKAHEQHWFNKKETEPRKKAFLKTAGLVKKGYMLCGTLAEVEPYNQEIAFYDAVRAILTKREQKGTGTNERQILLKKLVNQTVYSEGVIDLFDLLEKPQPQISLLSEEFLQTVKNSPTKNLWVSAMERYLASEIKVKSGTNLTLQKDFERRLKEALNQYHNHNLTVVEILDELFKMSQDFQERLALGKKLGLTKEELAFYEALSQNQSAKDLMGDEVLSKLAKEITETLRKSVTIDWQYKEAVRARIRLLVRRALQKYKYPPDKQEEAVTYVIKQAEEIAEDLTGL.

In terms of domain architecture, Helicase ATP-binding spans 287–468 (TSEKGDRRIG…QDVFGRYVSI (182 aa)).

This sequence belongs to the HsdR family. In terms of assembly, the type I restriction/modification system is composed of three polypeptides R, M and S; the restriction enzyme has stoichiometry R(2)M(2)S(1) while the methyltransferase is M(2)S(1).

It carries out the reaction Endonucleolytic cleavage of DNA to give random double-stranded fragments with terminal 5'-phosphates, ATP is simultaneously hydrolyzed.. The restriction (R) subunit of a type I restriction enzyme that recognizes 5'-RAACN(5)TAG-3' and cleaves a random distance away. Subunit R is required for both nuclease and ATPase activities, but not for modification. After locating a non-methylated recognition site, the enzyme complex serves as a molecular motor that translocates DNA in an ATP-dependent manner until a collision occurs that triggers cleavage. This chain is Type I restriction enzyme HindI endonuclease subunit, found in Haemophilus influenzae (strain ATCC 51907 / DSM 11121 / KW20 / Rd).